A 579-amino-acid chain; its full sequence is MENLKQLQERVAVSDGRAKADLVIKNGRIVNVFSGEIMEGDIAIKNGYIAGIGHFPDADQIIDAAGEFISPGFIDAHVHVESAMVTPSEFARVLLPNGVTTIITDPHEIANVAGEKGIEFMLEDAKGAPLDMFVMLPSSVPATEGEHNGETLHAKQLHPLYKHEKVIGLAEVMDFPSVAKGSADILTKIIDAKQEGGRIDGHGAGLTSADLNNYLAVGIRTDHESTSAKEALDRLRAGMFVMLREGTVGRDLKQTISAVTEKNSHRFCFCTDDKLINDLLTEGSINYNIRLAIENGVEPITAIQMATINAANCHNLPYLGAVAAGYQADIVFLKDLKTIEISKVLKNGQVVVENGTRKEAAFKKENKAKFISPKINHHLSIKDLELPLTNETCYVIGMQQNNLFTEKLMEQVTIKNGKFVPSIEKDLLKMAVVERHHNTGCVGVGIVKGFGLTEGAIATTVAHDSHNIVAVGVSDEAMEKAIDHVTKTGGGIAVVDAAGNVLHDLALQVAGLLSDKPYEEVENDLAGLLKAFNQISKAKGFDPFLTLSFLTLPVIPELKLTDQGLFDFATFQIIPNEVN.

It belongs to the metallo-dependent hydrolases superfamily. Adenine deaminase family. Mn(2+) serves as cofactor.

The catalysed reaction is adenine + H2O + H(+) = hypoxanthine + NH4(+). In Listeria innocua serovar 6a (strain ATCC BAA-680 / CLIP 11262), this protein is Adenine deaminase.